The sequence spans 74 residues: MGRDTIADIITSIRNVDMNRKGTVRIESTNMAEKIVKILLREGFIENVRKHQENKKSFLVLTLRHRRNRKGPSP.

The protein belongs to the universal ribosomal protein uS8 family. Part of the 30S ribosomal subunit.

The protein resides in the plastid. It is found in the chloroplast. One of the primary rRNA binding proteins, it binds directly to 16S rRNA central domain where it helps coordinate assembly of the platform of the 30S subunit. The chain is Small ribosomal subunit protein uS8c (rps8) from Oenothera ammophila (Evening primerose).